Consider the following 848-residue polypeptide: Transforming growth factor beta receptor type 3 (848 aa).

A signal peptide spans 1 to 20 (MTLHCVVALFALISSCLATA). The Extracellular segment spans residues 21–784 (GPEPGVQCAL…IFHGLDTLTV (764 aa)). N-linked (GlcNAc...) asparagine glycans are attached at residues Asn34 and Asn141. The cysteines at positions 52 and 197 are disulfide-linked. Positions 390–448 (SGEGAARHGGLPFPFPYIPRRGRQDGGKDRLPRPKDPVVPSIQLLPGPREPQEAQGSRD) are disordered. Positions 411–425 (GRQDGGKDRLPRPKD) are enriched in basic and acidic residues. The 276-residue stretch at 454-729 (RCDSEKMLVA…PKCVLPDEAC (276 aa)) folds into the ZP domain. The N-linked (GlcNAc...) asparagine glycan is linked to Asn491. 3 O-linked (Xyl...) (glycosaminoglycan) serine glycosylation sites follow: Ser529, Ser533, and Ser544. Asn570, Asn589, and Asn696 each carry an N-linked (GlcNAc...) asparagine glycan. 3 disulfide bridges follow: Cys638/Cys704, Cys659/Cys729, and Cys709/Cys722. The segment at 736–750 (MIWAMMQNKKTFTKP) is interaction with TGF-beta ligand. A helical membrane pass occupies residues 785-806 (MGIAFAAFVIGALLTGALWYIY). The Cytoplasmic segment spans residues 807 to 848 (SHTGDSAGRQPVPTSPPASENSSAAHSLGSTQSTPCSSSSAA). Positions 813–848 (AGRQPVPTSPPASENSSAAHSLGSTQSTPCSSSSAA) are disordered. A compositionally biased stretch (low complexity) spans 833–848 (SLGSTQSTPCSSSSAA). A Phosphothreonine modification is found at Thr837.

In terms of assembly, forms homodimers and homooligomers. Interacts with DYNLT4. Interacts with integrin ITGA5:ITGB1; this interaction promotes the internalization and trafficking of ITGA5:ITGB1 into endocytic vesicles. Interacts with TGFB1, BMP2, BMP5, BMP7 or GDF5 and inhibin A via the ligand binding domains. Interacts with ALK3/BMPR1A; this interaction results in the cell surface retention of BMPR1A. Interacts with ALK6/BMPR1B; this interaction enhances BMPR1B-mediated stimulation of the BMP signaling pathway. Interacts with the scaffolding protein beta-arrestin2/ARRB2; this interaction mediates internalization of TGFBR3 and thus regulates migration, actin cytoskeleton and activation of CDC42. Post-translationally, extensively modified by glycosaminoglycan groups (GAG). Phosphorylated in the cytoplasmic domain by the type II receptor TGFBR2 at THR-837 to mediate recruitment of ARRB2 and subsequent internalization of TGFBR2 and TGFBR3.

It is found in the cell membrane. The protein resides in the secreted. The protein localises to the extracellular space. Its subcellular location is the extracellular matrix. Functionally, cell surface receptor that regulates diverse cellular processes including cell proliferation, differentiation, migration, and apoptosis. Initiates BMP, inhibin, and TGF-beta signaling pathways by interacting with different ligands including TGFB1, BMP2, BMP5, BMP7 or GDF5. Alternatively, acts as a cell surface coreceptor for BMP ligands, serving to enhance ligand binding by differentially regulating BMPR1A/ALK3 and BMPR1B/ALK6 receptor trafficking. Promotes epithelial cell adhesion, focal adhesion formation and integrin signaling during epithelial cell spreading on fibronectin. By interacting with the scaffolding protein beta-arrestin2/ARRB2, regulates migration or actin cytoskeleton and promotes the activation of CDC42 as well as the inhibition of NF-kappa-B. In gonadotrope cells, acts as an inhibin A coreceptor and regulates follicle-stimulating hormone (FSH) levels and female fertility. Plays a role in the inhibition of directed and random cell migration in epithelial cells by altering the actin cytoskeletal organization. Participates in epithelial-mesenchymal transformation (EMT) upon binding to BMP2 or TGFB2, by activating the PAR6/SMURF1/RHOA pathway. The protein is Transforming growth factor beta receptor type 3 (TGFBR3) of Sus scrofa (Pig).